Reading from the N-terminus, the 506-residue chain is 2,3-bisphosphoglycerate-independent phosphoglycerate mutase (506 aa).

2 residues coordinate Mn(2+): Asp-12 and Ser-63. Ser-63 acts as the Phosphoserine intermediate in catalysis. Substrate is bound by residues His-122, 151-152 (RD), Arg-182, Arg-188, 253-256 (RADR), and Lys-323. The Mn(2+) site is built by Asp-390, His-394, Asp-432, His-433, and His-451.

This sequence belongs to the BPG-independent phosphoglycerate mutase family. Monomer. The cofactor is Mn(2+).

It carries out the reaction (2R)-2-phosphoglycerate = (2R)-3-phosphoglycerate. Its pathway is carbohydrate degradation; glycolysis; pyruvate from D-glyceraldehyde 3-phosphate: step 3/5. Its function is as follows. Catalyzes the interconversion of 2-phosphoglycerate and 3-phosphoglycerate. This Wolbachia pipientis wMel protein is 2,3-bisphosphoglycerate-independent phosphoglycerate mutase.